The sequence spans 132 residues: Transmembrane protein C1orf162 homolog (132 aa).

Residues I36–L56 traverse the membrane as a helical segment. The disordered stretch occupies residues T95 to P132. The span at N104 to V124 shows a compositional bias: polar residues. Phosphoserine is present on S111.

It is found in the membrane. In Mus musculus (Mouse), this protein is Transmembrane protein C1orf162 homolog.